A 288-amino-acid polypeptide reads, in one-letter code: Bifunctional protein FolD (288 aa).

NADP(+)-binding positions include 166–168 (GRS), Ser191, and Val232.

The protein belongs to the tetrahydrofolate dehydrogenase/cyclohydrolase family. As to quaternary structure, homodimer.

It catalyses the reaction (6R)-5,10-methylene-5,6,7,8-tetrahydrofolate + NADP(+) = (6R)-5,10-methenyltetrahydrofolate + NADPH. The catalysed reaction is (6R)-5,10-methenyltetrahydrofolate + H2O = (6R)-10-formyltetrahydrofolate + H(+). It functions in the pathway one-carbon metabolism; tetrahydrofolate interconversion. Catalyzes the oxidation of 5,10-methylenetetrahydrofolate to 5,10-methenyltetrahydrofolate and then the hydrolysis of 5,10-methenyltetrahydrofolate to 10-formyltetrahydrofolate. This Roseiflexus sp. (strain RS-1) protein is Bifunctional protein FolD.